The following is a 200-amino-acid chain: Small ribosomal subunit protein uS4 (200 aa).

The S4 RNA-binding domain maps to 91-150 (TRLDNVVYRLGITPTRRSARQLVSHKHITVNGKIVNIPSYALKVGDIIGLTEKTKSSNAI).

Belongs to the universal ribosomal protein uS4 family. As to quaternary structure, part of the 30S ribosomal subunit. Contacts protein S5. The interaction surface between S4 and S5 is involved in control of translational fidelity.

One of the primary rRNA binding proteins, it binds directly to 16S rRNA where it nucleates assembly of the body of the 30S subunit. Its function is as follows. With S5 and S12 plays an important role in translational accuracy. The protein is Small ribosomal subunit protein uS4 of Amoebophilus asiaticus (strain 5a2).